A 70-amino-acid polypeptide reads, in one-letter code: ANPCNPAQLTPCAGPALFGGAVPPACCAQLRAQQGCLCGYARSPNYGSYIRSPNAARLFAICNLPMPRCR.

Disulfide bonds link cysteine 4–cysteine 38, cysteine 12–cysteine 26, cysteine 27–cysteine 62, and cysteine 36–cysteine 69.

In terms of biological role, potential phospholipid transfer protein. The chain is Probable non-specific lipid-transfer protein 2 from Zea mays (Maize).